The following is a 209-amino-acid chain: Urease accessory protein UreG (209 aa).

GTP is bound at residue 18–25; it reads GPVGSGKT.

It belongs to the SIMIBI class G3E GTPase family. UreG subfamily. As to quaternary structure, homodimer. UreD, UreF and UreG form a complex that acts as a GTP-hydrolysis-dependent molecular chaperone, activating the urease apoprotein by helping to assemble the nickel containing metallocenter of UreC. The UreE protein probably delivers the nickel.

Its subcellular location is the cytoplasm. In terms of biological role, facilitates the functional incorporation of the urease nickel metallocenter. This process requires GTP hydrolysis, probably effectuated by UreG. In Cupriavidus necator (strain ATCC 17699 / DSM 428 / KCTC 22496 / NCIMB 10442 / H16 / Stanier 337) (Ralstonia eutropha), this protein is Urease accessory protein UreG.